Reading from the N-terminus, the 360-residue chain is MNVDALTGGFDRRDWQEQTATDNPVRFAMIGVGWWTTEQAMPAVDAGDLCETTVLVSSDREKAADVAADSETVEHAITYEEFHDGAASDAYDAVYIVTPNALHLPYVETAAELDKAILCEKPMEATIERAERMVEVCDEHDATLMIAYRMHTEPAVRRAKDLIDEGYIGEPLFVHGNMTEPILELVPDPDQWRLDGELSGGCAVMDIGIYPLNTSRFLLDADPVAVRGTVASVQEEFADVPDEHGAFQLDFPGHVYAVCTASQNAHLDSHISVLGTEGKVRVEPAFYPWDDRALQLSHEGTTVEIDFEQIDQMEEEFEYFAHCLLTDTEPYADGEHGLVDINTIKSVYEASETESTVRLD.

It belongs to the Gfo/Idh/MocA family. Homotretramer.

The enzyme catalyses D-xylofuranose + NADP(+) = D-xylono-1,4-lactone + NADPH + H(+). Functionally, NADP-dependent D-xylose dehydrogenase involved in the degradation of D-xylose, a major component of hemicelluloses such as xylan. In addition to D-xylose, oxidizes D-ribose at similar kinetic constants, whereas D-glucose is oxidized with about 70-fold lower catalytic efficiency. The sequence is that of D-xylose 1-dehydrogenase [NADP(+)] (gfo6) from Haloarcula marismortui (strain ATCC 43049 / DSM 3752 / JCM 8966 / VKM B-1809) (Halobacterium marismortui).